The primary structure comprises 941 residues: Zinc finger protein 507 (941 aa).

Ser-95 is subject to Phosphoserine. C2H2-type zinc fingers lie at residues 122–144 and 152–175; these read YQCS…VKQH and LMCS…VSEH. The segment covering 165 to 177 has biased composition (basic and acidic residues); the sequence is QELEAHVVSEHEN. A disordered region spans residues 165–198; that stretch reads QELEAHVVSEHENSASSQARSSPSGQGATERKSE. Over residues 178 to 192 the composition is skewed to low complexity; sequence SASSQARSSPSGQGA. The C2H2-type 3 zinc finger occupies 237–259; the sequence is YRCLFCSYTCGQQRMLKTHAWKH. Position 415 is a phosphoserine (Ser-415). Positions 455 to 477 are disordered; it reads ELSKGLAPDENAPPGRRRTNSES. C2H2-type zinc fingers lie at residues 630–652, 658–680, 686–709, 746–768, and 774–796; these read YRCR…LRVH, YQCP…MINH, HQCK…REQH, YRCD…RRVH, and YRCS…MWKH. A disordered region spans residues 823-856; sequence GKSRGKPLLTSSEERTGPTTGSPENLVSSSELTS. Residues 839–856 show a composition bias toward polar residues; that stretch reads GPTTGSPENLVSSSELTS. Residues 899–921 form a C2H2-type 9 zinc finger; it reads FCCCICGFESTSKESLLDHMKEH.

This sequence belongs to the krueppel C2H2-type zinc-finger protein family.

It is found in the nucleus. In terms of biological role, may be involved in transcriptional regulation. The sequence is that of Zinc finger protein 507 (Znf507) from Mus musculus (Mouse).